Here is a 90-residue protein sequence, read N- to C-terminus: uncharacterized protein (90 aa).

This is an uncharacterized protein from Bos taurus (Bovine).